Reading from the N-terminus, the 484-residue chain is Cobyric acid synthase (484 aa).

In terms of domain architecture, GATase cobBQ-type spans 251-438; the sequence is ALKIAVPVLS…LHGLFGNDEY (188 aa). Catalysis depends on Cys-333, which acts as the Nucleophile. His-430 is an active-site residue.

This sequence belongs to the CobB/CobQ family. CobQ subfamily.

It functions in the pathway cofactor biosynthesis; adenosylcobalamin biosynthesis. Its function is as follows. Catalyzes amidations at positions B, D, E, and G on adenosylcobyrinic A,C-diamide. NH(2) groups are provided by glutamine, and one molecule of ATP is hydrogenolyzed for each amidation. The polypeptide is Cobyric acid synthase (Allorhizobium ampelinum (strain ATCC BAA-846 / DSM 112012 / S4) (Agrobacterium vitis (strain S4))).